The primary structure comprises 271 residues: GATA transcription factor 19 (271 aa).

Residues methionine 1–alanine 23 form a disordered region. The Tify domain maps to leucine 33–glycine 68. One can recognise a CCT domain in the interval arginine 95–arginine 137. A GATA-type zinc finger spans residues cysteine 166–cysteine 193. Residues asparagine 238–serine 271 form a disordered region. The span at glutamine 252–serine 271 shows a compositional bias: basic and acidic residues.

Belongs to the type IV zinc-finger family. Class C subfamily.

It is found in the nucleus. Transcriptional activator that specifically binds 5'-GATA-3' or 5'-GAT-3' motifs within gene promoters. The protein is GATA transcription factor 19 of Oryza sativa subsp. indica (Rice).